A 477-amino-acid chain; its full sequence is Protein kinase C and casein kinase substrate in neurons protein 2 (477 aa).

Positions 11-282 (VEVSSDSFWE…AIKSADAMED (272 aa)) constitute an F-BAR domain. Residues 25-274 (KRTVKRIDDG…SIYRELEYAI (250 aa)) adopt a coiled-coil conformation. 2 stretches are compositionally biased toward basic and acidic residues: residues 163–176 (CKEEKLATSRETNS) and 186–216 (QLKKLQDKVEKSKQDSQKTKEKYEKSLKDLD). Disordered stretches follow at residues 163–218 (CKEE…LDGT) and 314–412 (RREK…PFDE). Residues 328–341 (GISQSGEQSSIQNQ) are compositionally biased toward low complexity. Positions 342 to 357 (HSSHLSVQSAQSTNNP) are enriched in polar residues. The NPF1 motif lies at 356–358 (NPF). Residues 370 to 388 (TENKKIENVGSYEKTHPAE) are compositionally biased toward basic and acidic residues. The span at 395-407 (NNPFNPSDTNGDN) shows a compositional bias: polar residues. The NPF2 signature appears at 396–398 (NPF). An NPF3 motif is present at residues 408 to 410 (NPF). The region spanning 417 to 477 (TLEVRVRALY…YPANYVESVQ (61 aa)) is the SH3 domain.

Belongs to the PACSIN family. Interacts with adam13 through the SH3 domains. Phosphorylated. As to expression, ubiquitously expressed with higher expression in the ectoderm, the neuroectoderm, and dorsal mesoderm layers.

Its subcellular location is the cytoplasm. The protein localises to the cytoskeleton. It localises to the cytoplasmic vesicle membrane. It is found in the cell projection. The protein resides in the ruffle membrane. Its subcellular location is the early endosome. The protein localises to the recycling endosome membrane. It localises to the cell membrane. It is found in the membrane. The protein resides in the caveola. Its subcellular location is the cell junction. The protein localises to the adherens junction. In terms of biological role, regulates the morphogenesis and endocytosis of caveolae. Lipid-binding protein that is able to promote the tubulation of the phosphatidic acid-containing membranes it preferentially binds. Plays a role in intracellular vesicle-mediated transport. Involved in the endocytosis of cell-surface receptors like the EGF receptor, contributing to its internalization in the absence of EGF stimulus. In Xenopus laevis (African clawed frog), this protein is Protein kinase C and casein kinase substrate in neurons protein 2 (pacsin2).